Reading from the N-terminus, the 981-residue chain is Polyhomeotic-like protein 3 (981 aa).

Low complexity predominate over residues 1-28; sequence MDSEPSSGTSVSTTASSTTTTTITTSSS. Disordered stretches follow at residues 1 to 33, 102 to 127, 224 to 280, and 307 to 407; these read MDSE…MQQP, LSSG…TSIL, LSSS…TAVT, and QIPL…SQSP. Positions 224-255 are enriched in polar residues; sequence LSSSQNGSPKSAGQTQSLTICHNKTTVTSSKI. Residues S231, S261, S269, and S312 each carry the phosphoserine modification. A compositionally biased stretch (basic and acidic residues) spans 256-266; the sequence is SQRDPSPESKK. Residues 321–340 show a composition bias toward low complexity; sequence QLLLQQQQQQIQPITLQSPS. Residues 360 to 373 show a composition bias toward polar residues; that stretch reads APSNAQPQHCSPVQ. The segment covering 381–395 has biased composition (low complexity); the sequence is VSPNQAQSAQQSVVV. 2 positions are modified to phosphothreonine: T607 and T612. A Phosphoserine modification is found at S614. The disordered stretch occupies residues 650 to 690; that stretch reads KSPSDPTHASAPAPPLLIPAASTRSSSTSLASSTPSLENKP. A compositionally biased stretch (low complexity) spans 667–686; that stretch reads IPAASTRSSSTSLASSTPSL. Glycyl lysine isopeptide (Lys-Gly) (interchain with G-Cter in SUMO2) cross-links involve residues K689 and K730. The short motif at 689 to 718 is the HD1 element; it reads KPPQAIVKPQILTHVIEGFVIQEGLEPFPV. S759 and S760 each carry phosphoserine. An FCS-type zinc finger spans residues 774 to 808; it reads EEMDSELLKCEFCGKMGYPNEFLRSKRFCTMSCAK. C783, C786, C802, and C806 together coordinate Zn(2+). A Glycyl lysine isopeptide (Lys-Gly) (interchain with G-Cter in SUMO2) cross-link involves residue K808. Disordered stretches follow at residues 825-844 and 863-888; these read RKPD…GPEG and EDVA…ERER. The region spanning 917 to 981 is the SAM domain; sequence WTVDDVWAFI…CARINSLKDS (65 aa).

Component of a PRC1-like complex. As to expression, ubiquitous expression.

It is found in the nucleus. In terms of biological role, component of a Polycomb group (PcG) multiprotein PRC1-like complex, a complex class required to maintain the transcriptionally repressive state of many genes, including Hox genes, throughout development. PcG PRC1 complex acts via chromatin remodeling and modification of histones; it mediates monoubiquitination of histone H2A 'Lys-119', rendering chromatin heritably changed in its expressibility. The sequence is that of Polyhomeotic-like protein 3 (Phc3) from Mus musculus (Mouse).